The primary structure comprises 382 residues: Ferredoxin--NADP reductase, root isozyme 2, chloroplastic (382 aa).

A chloroplast-targeting transit peptide spans 1-64 (MSHSAVSQAG…DGKRYPSTTI (64 aa)). An FAD-binding FR-type domain is found at 97-225 (KESYTAKIVS…TGPSGKVMLL (129 aa)). Cys-200 and Cys-205 form a disulfide bridge. Ser-201 carries the phosphoserine modification. A Phosphothreonine modification is found at Thr-233. Residue 235-253 (IMIATGTGVAPYRGYLRRM) coordinates NADP(+).

Belongs to the ferredoxin--NADP reductase type 1 family. Requires FAD as cofactor. As to expression, expressed in shoots and roots. More abundant in roots than RFNR1.

The protein localises to the plastid. The protein resides in the chloroplast. The enzyme catalyses 2 reduced [2Fe-2S]-[ferredoxin] + NADP(+) + H(+) = 2 oxidized [2Fe-2S]-[ferredoxin] + NADPH. Functionally, maintains the supply of reduced ferredoxin under non-photosynthetic conditions. The protein is Ferredoxin--NADP reductase, root isozyme 2, chloroplastic (RFNR2) of Arabidopsis thaliana (Mouse-ear cress).